Here is a 247-residue protein sequence, read N- to C-terminus: RNA polymerase sigma factor FliA (247 aa).

A sigma-70 factor domain-2 region spans residues 22–94; the sequence is LIQRYAPLVK…MLDEVRKGDW (73 aa). The short motif at 49 to 52 is the Interaction with polymerase core subunit RpoC element; sequence DLMQ. Residues 102–171 are sigma-70 factor domain-3; it reads NTRMVTDAIR…GLPEDTSLSH (70 aa). The sigma-70 factor domain-4 stretch occupies residues 190-238; that stretch reads AIAKLPERERLVLALYYDEELNLKEIGEVLGVSESRVSQLHSQCAARLR. The segment at residues 212-231 is a DNA-binding region (H-T-H motif); the sequence is LKEIGEVLGVSESRVSQLHS.

The protein belongs to the sigma-70 factor family. FliA subfamily.

It is found in the cytoplasm. Functionally, sigma factors are initiation factors that promote the attachment of RNA polymerase to specific initiation sites and are then released. This sigma factor controls the expression of flagella-related genes. Required for the flagellin gene (fliC) expression. The sequence is that of RNA polymerase sigma factor FliA from Pseudomonas aeruginosa (strain ATCC 15692 / DSM 22644 / CIP 104116 / JCM 14847 / LMG 12228 / 1C / PRS 101 / PAO1).